The sequence spans 78 residues: Small ribosomal subunit protein bS18 (78 aa).

The protein belongs to the bacterial ribosomal protein bS18 family. Part of the 30S ribosomal subunit. Forms a tight heterodimer with protein bS6.

In terms of biological role, binds as a heterodimer with protein bS6 to the central domain of the 16S rRNA, where it helps stabilize the platform of the 30S subunit. The protein is Small ribosomal subunit protein bS18 of Rhodospirillum rubrum (strain ATCC 11170 / ATH 1.1.1 / DSM 467 / LMG 4362 / NCIMB 8255 / S1).